Here is a 1687-residue protein sequence, read N- to C-terminus: A-kinase anchor protein SPHKAP (1687 aa).

The span at Met-1–Glu-14 shows a compositional bias: polar residues. 2 disordered regions span residues Met-1–Gln-25 and Arg-272–Ser-293. Residues Phe-914–Ala-931 form a PKA-RII subunit binding domain region. Residues Leu-964–Lys-989 form a disordered region. 8 positions are modified to phosphoserine: Ser-1010, Ser-1070, Ser-1092, Ser-1105, Ser-1106, Ser-1109, Ser-1244, and Ser-1273. Disordered stretches follow at residues Val-1363–Arg-1406 and Asp-1421–Thr-1520. Residues Gly-1366 to Gly-1375 show a composition bias toward polar residues. Basic and acidic residues predominate over residues Lys-1382–Ser-1393. The span at Thr-1461 to Arg-1470 shows a compositional bias: polar residues. A compositionally biased stretch (basic and acidic residues) spans Glu-1482–Arg-1494. The segment covering Asn-1495–Ser-1508 has biased composition (low complexity).

Belongs to the AKAP110 family. In terms of assembly, interacts (via the PKA-RII subunit binding domain) with the RI subunit of PKA. Interacts with SPHK1; the interaction greatly reduces SPHK1 activity.

Its subcellular location is the cytoplasm. Anchoring protein that binds preferentially to the type I regulatory subunit of c-AMP-dependent protein kinase (PKA type I) and targets it to distinct subcellular compartments. May act as a converging factor linking cAMP and sphingosine signaling pathways. Plays a regulatory role in the modulation of SPHK1. The sequence is that of A-kinase anchor protein SPHKAP (Sphkap) from Mus musculus (Mouse).